Here is a 176-residue protein sequence, read N- to C-terminus: KxDL motif-containing protein 1 (176 aa).

M1 is subject to N-acetylmethionine. Residues 95 to 176 form a disordered region; it reads HPEAFSHIPE…HTDDEEMPGE (82 aa). Residues 119-131 show a composition bias toward low complexity; the sequence is STTTTIATSEQST. Residues 132 to 145 are compositionally biased toward polar residues; that stretch reads GSCDTSPDTVSPSL.

It belongs to the KXD1 family. In terms of assembly, component of the BLOC-one-related complex (BORC) which is composed of BLOC1S1, BLOC1S2, BORCS5, BORCS6, BORCS7, BORCS8, KXD1 and SNAPIN. Associates with the BLOC-1 complex. Interacts with BLOC1S1. Interacts with DTNBP1/BLOC1S7 (via coiled-coil domain).

Its subcellular location is the lysosome membrane. Its function is as follows. As part of the BORC complex may play a role in lysosomes movement and localization at the cell periphery. Associated with the cytosolic face of lysosomes, the BORC complex may recruit ARL8B and couple lysosomes to microtubule plus-end-directed kinesin motor. May also be involved in the biogenesis of lysosome-related organelles such as melanosomes. This Bos taurus (Bovine) protein is KxDL motif-containing protein 1 (KXD1).